The sequence spans 1427 residues: Protein expanded (1427 aa).

In terms of domain architecture, FERM spans 26-399 (RFLALRLLGQ…DTHQWSMKLA (374 aa)). A disordered region spans residues 176-212 (GDAPPGTSNSKDDSGEETSASPSNGGRGLSATTTLPK). Residues 192–211 (ETSASPSNGGRGLSATTTLP) show a composition bias toward polar residues. Tyr227 and Tyr423 each carry phosphotyrosine. Disordered regions lie at residues 520–566 (VRPQ…IGSQ) and 611–656 (NSAL…SGVY). Positions 524–544 (DASSNGATIVTNSSVQRNSMG) are enriched in polar residues. The span at 545–559 (TTANDSSTATDSPSS) shows a compositional bias: low complexity. At Tyr679 the chain carries Phosphotyrosine. Basic and acidic residues predominate over residues 688–710 (EETHVQHSDSVDGKKKEDFRPRS). Disordered stretches follow at residues 688–732 (EETH…DNKH), 766–792 (YVTLPLGDQGEEEVDQPPAPPPPYSAR), 815–880 (APKP…SLKS), 939–963 (HNSNYAGGSQASLHHHHVPSHHRHS), and 1000–1022 (LAPPPPSLPRQPPPPPPPNHPHL). Tyr766 carries the post-translational modification Phosphotyrosine. Residues 818 to 838 (PDSPPCSPPVPPAPIPAPPPA) are compositionally biased toward pro residues. Residues 842 to 847 (RDPPPY) carry the RXPPXY motif motif. The segment covering 848-859 (SISSKPRPTSLI) has biased composition (polar residues). Positions 860–877 (SVSSSAHPAPSAAGSMSS) are enriched in low complexity. Basic residues predominate over residues 951–963 (LHHHHVPSHHRHS). Positions 1001–1019 (APPPPSLPRQPPPPPPPNH) are enriched in pro residues. Residues 1008–1020 (PRQPPPPPPPNHP) carry the SH3-binding motif. A Phosphotyrosine modification is found at Tyr1103. Residues 1149–1157 (PPPPPPLHP) carry the SH3-binding motif. The residue at position 1181 (Ser1181) is a Phosphoserine. Disordered stretches follow at residues 1190–1267 (DLLP…WAGE) and 1345–1398 (TGQE…LPVQ). 2 stretches are compositionally biased toward pro residues: residues 1214-1230 (PPMPAPSEKPPPIPSKP) and 1237-1246 (PIPPRKPPTL). Polar residues-rich tracts occupy residues 1253 to 1262 (SPLTKTSSGA) and 1345 to 1370 (TGQEMPTSSAQPSGATTNGVANSSAG). Residues 1376–1388 (KARKGSTVSHRHP) show a composition bias toward basic residues.

As to quaternary structure, forms a complex with Kibra and Mer. Interacts (via RXPPXY motif) with Kibra (via domain WW 1). Interacts with Mer and Hpo (via SARAH domain). Interacts with Schip1; the interaction results in recruitment of Schip1 to the apical cell membrane. Interacts with ack and yki. Post-translationally, phosphorylated by Ack at several tyrosines including Tyr-227, Tyr-423, Tyr-679, Tyr-766 and Tyr-1103.

The protein resides in the apical cell membrane. Functionally, activates the Hippo/SWH (Sav/Wts/Hpo) signaling pathway, a signaling pathway that plays a pivotal role in organ size control and tumor suppression by restricting proliferation and promoting apoptosis. The core of this pathway is composed of a kinase cascade wherein Hippo (Hpo), in complex with its regulatory protein Salvador (Sav), phosphorylates and activates Warts (Wts) in complex with its regulatory protein Mats, which in turn phosphorylates and inactivates the Yorkie (Yki) oncoprotein. Ex acts synergistically along with Mer and Kibra to regulate the Hippo signaling pathway. Involved in the control of cell proliferation in imaginal disks. May bind to certain proteins of signal transduction pathways by interaction with their SH3 domains. Required for apical localization of Schip1. This is Protein expanded (ex) from Drosophila melanogaster (Fruit fly).